Consider the following 334-residue polypeptide: Beta-ketoacyl-[acyl-carrier-protein] synthase III (334 aa).

Active-site residues include cysteine 114 and histidine 253. An ACP-binding region spans residues glutamine 254 to arginine 258. The active site involves asparagine 283.

This sequence belongs to the thiolase-like superfamily. FabH family. In terms of assembly, homodimer.

It localises to the cytoplasm. It catalyses the reaction malonyl-[ACP] + acetyl-CoA + H(+) = 3-oxobutanoyl-[ACP] + CO2 + CoA. The protein operates within lipid metabolism; fatty acid biosynthesis. Functionally, catalyzes the condensation reaction of fatty acid synthesis by the addition to an acyl acceptor of two carbons from malonyl-ACP. Catalyzes the first condensation reaction which initiates fatty acid synthesis and may therefore play a role in governing the total rate of fatty acid production. Possesses both acetoacetyl-ACP synthase and acetyl transacylase activities. Its substrate specificity determines the biosynthesis of branched-chain and/or straight-chain of fatty acids. In Campylobacter concisus (strain 13826), this protein is Beta-ketoacyl-[acyl-carrier-protein] synthase III.